We begin with the raw amino-acid sequence, 293 residues long: Ribonuclease HII (293 aa).

Residues 81–271 (THIAGVDEAG…VREALGLPTG (191 aa)) form the RNase H type-2 domain. The a divalent metal cation site is built by aspartate 87, glutamate 88, and aspartate 180. The disordered stretch occupies residues 273–293 (PPSALQAELFPEAPSRTGVKS).

It belongs to the RNase HII family. Mn(2+) serves as cofactor. Requires Mg(2+) as cofactor.

It is found in the cytoplasm. The catalysed reaction is Endonucleolytic cleavage to 5'-phosphomonoester.. Endonuclease that specifically degrades the RNA of RNA-DNA hybrids. The sequence is that of Ribonuclease HII from Myxococcus xanthus (strain DK1622).